Reading from the N-terminus, the 116-residue chain is Iron-sulfur cluster insertion protein ErpA (116 aa).

Iron-sulfur cluster contacts are provided by Cys-44, Cys-108, and Cys-110.

This sequence belongs to the HesB/IscA family. Homodimer. Iron-sulfur cluster is required as a cofactor.

Its function is as follows. Required for insertion of 4Fe-4S clusters for at least IspG. The polypeptide is Iron-sulfur cluster insertion protein ErpA (Shewanella pealeana (strain ATCC 700345 / ANG-SQ1)).